We begin with the raw amino-acid sequence, 367 residues long: Peptide chain release factor 2 (367 aa).

Residue glutamine 254 is modified to N5-methylglutamine.

Belongs to the prokaryotic/mitochondrial release factor family. Methylated by PrmC. Methylation increases the termination efficiency of RF2.

Its subcellular location is the cytoplasm. In terms of biological role, peptide chain release factor 2 directs the termination of translation in response to the peptide chain termination codons UGA and UAA. This chain is Peptide chain release factor 2, found in Neisseria meningitidis serogroup B (strain ATCC BAA-335 / MC58).